An 856-amino-acid chain; its full sequence is MDNAAIASQSNTPPSNGRSSARFVTPISVHSSPISAEVIEPSSPFSPPSPSTLLTSLSKSPSHKISNLQMDGAKTTCLEVIQNSSLVVDSPKRQDKSITGSKAKPASTMRHGQRTASHKMATQTEIQTVDGDRLIVSPKTRKKKAATAKRTRKQDGVAERRLHGHVSKVKSPGDLKLDAKIPPSKPCDNKAPSVGDNTDNELERQTGGLQLEKATKRRLDWTPTKEGPIPMVDLAEVHSSSCGKSVIRTHSAGTLLSNYGFSGVVNTSLAPMPETCDNGPTTKRLMELQNFYSASGIQTPTESRPATNDSQSISSKQQRVKVKKPQKAKLTTLTSYVTAKYSVVDQTADLDRIETVNSGKNKKMGVTKRTSGTERANAARGKSDTLKNGNGPPVFKVVPPLEAFKSFDGQELLFGTSSQLEHGHSEDQDEEIQHTADSINKSNVVPRPAVSKGLGSSLFRLSSSKNLWSASSRDLTGAVLQVDEIDLSERSIEVSTPAAKYKRKTGIRDLSGQNVIDVEKDTRTLAANIDTRELDNMNEPSLAEDDLVYRENLESTNAKLNSQTPANISEAMLERPPPDKPIFGGFTTSELAKQVAAYGFKPIKSRDKMISLLEKCWENQSKSSKLEPKPNQRNHKSQGDDLAERQLLGLKPRSDSISFVITRSPKKRLAKTSVKSQEPKSFSLSNEGPRITSKLPMKRFVSPCAILIDDDQSSDSVGEALPLSPSHSSNGNGTLHHPQDCDEIHAPTTQMAIRSAKSSISVSSTTNLPSLSSQITKAVQSQPRIRAFKGLKQPTWYEKILMYDPIQLEDLAAWLNTGGFGLIGEDREVGAGVVREWCESKGICCVWKKQASAKSH.

Over residues 1–19 the composition is skewed to polar residues; sequence MDNAAIASQSNTPPSNGRS. Disordered stretches follow at residues 1-24, 38-65, 88-121, 139-202, 296-326, 362-392, 621-640, 668-689, and 715-742; these read MDNA…ARFV, VIEP…SHKI, VDSP…HKMA, KTRK…DNEL, GIQT…KKPQ, KKMG…GNGP, SKSS…SQGD, RLAK…NEGP, and DSVG…QDCD. Positions 51 to 60 are enriched in low complexity; it reads STLLTSLSKS. Positions 139-152 are enriched in basic residues; it reads KTRKKKAATAKRTR. A compositionally biased stretch (polar residues) spans 296–309; the sequence is GIQTPTESRPATND. A compositionally biased stretch (polar residues) spans 673 to 686; sequence SVKSQEPKSFSLSN.

It belongs to the SLX4 family. In terms of assembly, forms a heterodimer with SLX1. Post-translationally, phosphorylated in response to DNA damage.

The protein resides in the nucleus. In terms of biological role, regulatory subunit of the SLX1-SLX4 structure-specific endonuclease that resolves DNA secondary structures generated during DNA repair and recombination. Has endonuclease activity towards branched DNA substrates, introducing single-strand cuts in duplex DNA close to junctions with ss-DNA. This is Structure-specific endonuclease subunit SLX4 from Blastomyces gilchristii (strain SLH14081) (Blastomyces dermatitidis).